The following is a 1901-amino-acid chain: Protein TIC 214 (1901 aa).

Transmembrane regions (helical) follow at residues 18–38 (IINSVVVVGLYYGFLTTFSIG), 64–84 (FITGQLMMFISIYYAPLHLAL), 87–107 (PHTITVLALPYLLFHFFWNNH), 124–144 (LSIQCVFLNNLIFQLFNHFIL), 172–192 (VGWLIGHILFMKWLGLVLVWI), and 221–241 (IFSILLFITCVYYLGRIPSPI). Disordered regions lie at residues 248-299 (EASK…EERW), 797-817 (REEQTKREEKKEKDKKGENKR), and 1591-1618 (IQEAKEPASQGEKERGSDIENKGNLGPV). Residues 256–268 (VESEEERDVEIET) are compositionally biased toward acidic residues. The span at 1591–1611 (IQEAKEPASQGEKERGSDIEN) shows a compositional bias: basic and acidic residues.

Belongs to the TIC214 family. As to quaternary structure, part of the Tic complex.

It is found in the plastid. Its subcellular location is the chloroplast inner membrane. Involved in protein precursor import into chloroplasts. May be part of an intermediate translocation complex acting as a protein-conducting channel at the inner envelope. This Nicotiana sylvestris (Wood tobacco) protein is Protein TIC 214.